Consider the following 228-residue polypeptide: Probable septum site-determining protein MinC (228 aa).

This sequence belongs to the MinC family. As to quaternary structure, interacts with MinD and FtsZ.

In terms of biological role, cell division inhibitor that blocks the formation of polar Z ring septums. Rapidly oscillates between the poles of the cell to destabilize FtsZ filaments that have formed before they mature into polar Z rings. Prevents FtsZ polymerization. This is Probable septum site-determining protein MinC from Bacillus anthracis (strain A0248).